The following is a 310-amino-acid chain: Ribosomal RNA small subunit methyltransferase H (310 aa).

S-adenosyl-L-methionine-binding positions include 32–34, aspartate 52, phenylalanine 79, aspartate 100, and glutamine 107; that span reads AGH.

Belongs to the methyltransferase superfamily. RsmH family.

The protein localises to the cytoplasm. The enzyme catalyses cytidine(1402) in 16S rRNA + S-adenosyl-L-methionine = N(4)-methylcytidine(1402) in 16S rRNA + S-adenosyl-L-homocysteine + H(+). In terms of biological role, specifically methylates the N4 position of cytidine in position 1402 (C1402) of 16S rRNA. In Halalkalibacterium halodurans (strain ATCC BAA-125 / DSM 18197 / FERM 7344 / JCM 9153 / C-125) (Bacillus halodurans), this protein is Ribosomal RNA small subunit methyltransferase H.